Reading from the N-terminus, the 61-residue chain is Photosystem II reaction center protein Z (61 aa).

2 consecutive transmembrane segments (helical) span residues Leu5–Ala25 and Asn38–Ser58.

The protein belongs to the PsbZ family. PSII is composed of 1 copy each of membrane proteins PsbA, PsbB, PsbC, PsbD, PsbE, PsbF, PsbH, PsbI, PsbJ, PsbK, PsbL, PsbM, PsbT, PsbX, PsbY, PsbZ, Psb30/Ycf12, at least 3 peripheral proteins of the oxygen-evolving complex and a large number of cofactors. It forms dimeric complexes.

Its subcellular location is the plastid. The protein resides in the chloroplast thylakoid membrane. May control the interaction of photosystem II (PSII) cores with the light-harvesting antenna, regulates electron flow through the 2 photosystem reaction centers. PSII is a light-driven water plastoquinone oxidoreductase, using light energy to abstract electrons from H(2)O, generating a proton gradient subsequently used for ATP formation. This Skeletonema costatum (Marine centric diatom) protein is Photosystem II reaction center protein Z.